A 96-amino-acid chain; its full sequence is Non-specific lipid-transfer protein 2 (96 aa).

The N-terminal stretch at 1-27 is a signal peptide; it reads MMRKLAVLVLAVAMVAACGGGVVGVAG. 4 disulfides stabilise this stretch: Cys30–Cys62, Cys38–Cys52, Cys53–Cys88, and Cys64–Cys95.

Its function is as follows. Transfer lipids across membranes. May play a role in plant defense or in the biosynthesis of cuticle layers. This chain is Non-specific lipid-transfer protein 2 (LTP-2), found in Oryza sativa subsp. japonica (Rice).